We begin with the raw amino-acid sequence, 49 residues long: Large ribosomal subunit protein bL33A (49 aa).

Belongs to the bacterial ribosomal protein bL33 family.

This chain is Large ribosomal subunit protein bL33A, found in Mycoplasmopsis agalactiae (strain NCTC 10123 / CIP 59.7 / PG2) (Mycoplasma agalactiae).